Here is a 524-residue protein sequence, read N- to C-terminus: Probable serine/threonine-protein kinase WNK10 (524 aa).

The Protein kinase domain occupies 16–273; sequence IRYNDVLGRG…ALELLKDQLL (258 aa). Residues 96–99 and Lys146 contribute to the ATP site; that span reads TELF. Asp163 acts as the Proton acceptor in catalysis. Ser477 carries the post-translational modification Phosphoserine. Residues 480-523 are a coiled coil; that stretch reads SNKQSEDLKTELNVIESQYNQSCQRLLRMKEEAIEKAKRKWMKL.

Belongs to the protein kinase superfamily. Ser/Thr protein kinase family. WNK subfamily.

The catalysed reaction is L-seryl-[protein] + ATP = O-phospho-L-seryl-[protein] + ADP + H(+). It catalyses the reaction L-threonyl-[protein] + ATP = O-phospho-L-threonyl-[protein] + ADP + H(+). In terms of biological role, may regulate flowering time by modulating the photoperiod pathway. The protein is Probable serine/threonine-protein kinase WNK10 (WNK10) of Arabidopsis thaliana (Mouse-ear cress).